The following is a 437-amino-acid chain: Histidinol dehydrogenase (437 aa).

NAD(+)-binding residues include Tyr137, Gln199, and Asn222. Substrate contacts are provided by Ser245, Gln267, and His270. Gln267 and His270 together coordinate Zn(2+). Catalysis depends on proton acceptor residues Glu335 and His336. Residues His336, Asp369, Glu423, and His428 each contribute to the substrate site. Residue Asp369 participates in Zn(2+) binding. His428 provides a ligand contact to Zn(2+).

The protein belongs to the histidinol dehydrogenase family. Zn(2+) serves as cofactor.

It carries out the reaction L-histidinol + 2 NAD(+) + H2O = L-histidine + 2 NADH + 3 H(+). It functions in the pathway amino-acid biosynthesis; L-histidine biosynthesis; L-histidine from 5-phospho-alpha-D-ribose 1-diphosphate: step 9/9. Its function is as follows. Catalyzes the sequential NAD-dependent oxidations of L-histidinol to L-histidinaldehyde and then to L-histidine. The protein is Histidinol dehydrogenase of Parasynechococcus marenigrum (strain WH8102).